A 314-amino-acid polypeptide reads, in one-letter code: MSFASDMKNELTRIDVDESNAKAELSALIRMNGALSLSNQQFVINIQTENATTARRIYSLIKRIFNVEVEILVRKKMKLKKNNIYICRTKVRAKEILDELGILKNGIFVHDIDASMIKDDEMRRSYLRGAFLAGGSVNNPETSSYHLEIFSQYENHSEGLTKLMNSYGLNAKHLERKKGSIAYLKEAEKISDFLSLIGGYQALLKFEDVRIVRDMRNSVNRLVNCETANLNKTVSAAMKQVESIQLIEQEIGLDNLPDRLREIAKLRVEHQEISLKELGEMISTGPISKSGVNHRLRKLNELADKIRSGEKIEL.

The H-T-H motif DNA-binding region spans 274–308; sequence SLKELGEMISTGPISKSGVNHRLRKLNELADKIRS.

The protein belongs to the WhiA family.

Its function is as follows. Involved in cell division and chromosome segregation. The protein is Probable cell division protein WhiA of Staphylococcus haemolyticus (strain JCSC1435).